A 459-amino-acid polypeptide reads, in one-letter code: Putrescine aminotransferase (459 aa).

Pyridoxal 5'-phosphate-binding positions include Gly-150–Thr-151 and Gln-274. The residue at position 300 (Lys-300) is an N6-(pyridoxal phosphate)lysine. Thr-332 is a binding site for pyridoxal 5'-phosphate.

The protein belongs to the class-III pyridoxal-phosphate-dependent aminotransferase family. Putrescine aminotransferase subfamily. The cofactor is pyridoxal 5'-phosphate.

It catalyses the reaction an alkane-alpha,omega-diamine + 2-oxoglutarate = an omega-aminoaldehyde + L-glutamate. It carries out the reaction putrescine + 2-oxoglutarate = 1-pyrroline + L-glutamate + H2O. The enzyme catalyses cadaverine + 2-oxoglutarate = 5-aminopentanal + L-glutamate. It participates in amine and polyamine degradation; putrescine degradation; 4-aminobutanal from putrescine (transaminase route): step 1/1. In terms of biological role, catalyzes the aminotransferase reaction from putrescine to 2-oxoglutarate, leading to glutamate and 4-aminobutanal, which spontaneously cyclizes to form 1-pyrroline. This is the first step in one of two pathways for putrescine degradation, where putrescine is converted into 4-aminobutanoate (gamma-aminobutyrate or GABA) via 4-aminobutanal. Also functions as a cadaverine transaminase in a a L-lysine degradation pathway to succinate that proceeds via cadaverine, glutarate and L-2-hydroxyglutarate. The chain is Putrescine aminotransferase from Salmonella agona (strain SL483).